The primary structure comprises 655 residues: Methyl-accepting chemotaxis protein McpC (655 aa).

Topologically, residues 1-8 (MFKKLHMK) are cytoplasmic. Residues 9 to 29 (IAVFVSIMLIITVVLLMLSSY) form a helical membrane-spanning segment. The Extracellular portion of the chain corresponds to 30 to 276 (LTLKPMITED…LMWISDKMNR (247 aa)). In terms of domain architecture, Cache spans 148–225 (WTEPYKDVVT…SNQGKNISKD (78 aa)). The helical transmembrane segment at 277–297 (ANLWISLIALIITIILSYFLA) threads the bilayer. The region spanning 298–350 (KTITGPIQQLIVKTKAVSAGDLTVRAESKSKDEVGILTRDFNLMVENMKEMVE) is the HAMP domain. Topologically, residues 298–655 (KTITGPIQQL…LMNTIAKFTL (358 aa)) are cytoplasmic. The region spanning 369–619 (VAAETNETSG…ESAAAAEEVN (251 aa)) is the Methyl-accepting transducer domain.

The protein belongs to the methyl-accepting chemotaxis (MCP) protein family. As to quaternary structure, interacts with FloT. Some glutamine residues are deamidated to glutamate by CheD and subsequently methylated.

It is found in the cell membrane. The protein resides in the membrane raft. In terms of biological role, chemotactic-signal transducers respond to changes in the concentration of attractants and repellents in the environment, transduce a signal from the outside to the inside of the cell, and facilitate sensory adaptation through the variation of the level of methylation. All amino acids serve as attractants in B.subtilis, they appear to cause an increase in the turnover methyl groups, leading to methylation of an unidentified acceptor, while repellents have been shown to cause a decrease in methyl group turnover. The methyl groups are added by a methyltransferase and removed by a methylesterase. McpC is required for taxis to cysteine, proline, threonine, glycine, serine, lysine, valine and arginine and for aspartate, glutamine, histidine and glutamate. Primarily mediates response to positive stimulus of PTS carbohydrates. Greatly influences the duration or magnitude of the response to negative PTS carbohydrate stimulus. This Bacillus subtilis (strain 168) protein is Methyl-accepting chemotaxis protein McpC (mcpC).